Reading from the N-terminus, the 110-residue chain is Large ribosomal subunit protein eL30 (110 aa).

This sequence belongs to the eukaryotic ribosomal protein eL30 family.

The protein is Large ribosomal subunit protein eL30 (rpl30e) of Methanocaldococcus jannaschii (strain ATCC 43067 / DSM 2661 / JAL-1 / JCM 10045 / NBRC 100440) (Methanococcus jannaschii).